The following is a 247-amino-acid chain: uncharacterized protein (247 aa).

This is an uncharacterized protein from Archaeoglobus fulgidus (strain ATCC 49558 / DSM 4304 / JCM 9628 / NBRC 100126 / VC-16).